The chain runs to 323 residues: Fructose-1,6-bisphosphatase class 1 (323 aa).

Mg(2+) contacts are provided by glutamate 88, aspartate 107, leucine 109, and aspartate 110. Residues 110 to 113 and asparagine 200 contribute to the substrate site; that span reads DGSS. Glutamate 272 contacts Mg(2+).

This sequence belongs to the FBPase class 1 family. In terms of assembly, homotetramer. Requires Mg(2+) as cofactor.

Its subcellular location is the cytoplasm. The catalysed reaction is beta-D-fructose 1,6-bisphosphate + H2O = beta-D-fructose 6-phosphate + phosphate. The protein operates within carbohydrate biosynthesis; gluconeogenesis. The protein is Fructose-1,6-bisphosphatase class 1 of Acinetobacter baylyi (strain ATCC 33305 / BD413 / ADP1).